The following is a 631-amino-acid chain: PTS system beta-glucoside-specific EIIBCA component (631 aa).

A PTS EIIB type-1 domain is found at 1 to 86 (MNYETLASEI…LSLDGMARFS (86 aa)). The active-site Phosphocysteine intermediate; for EIIB activity is Cys-26. The region spanning 105–466 (DIISSIFTPF…DETQPAAADS (362 aa)) is the PTS EIIC type-1 domain. 10 consecutive transmembrane segments (helical) span residues 120 to 140 (ATGI…ISES), 146 to 166 (LLFA…GYTA), 175 to 195 (FTTL…AFNA), 206 to 226 (FLGI…ILFA), 248 to 268 (FFTP…LIGP), 295 to 315 (VMGA…FVPL), 328 to 348 (LLPL…GVLL), 358 to 378 (IAGS…VYGV), 385 to 405 (PFIF…YAHT), and 434 to 454 (AVIG…SFGV). One can recognise a PTS EIIA type-1 domain in the interval 501–605 (DRTFASGVMG…DLTTPIVITN (105 aa)). His-553 functions as the Tele-phosphohistidine intermediate; for EIIA activity in the catalytic mechanism.

It is found in the cell inner membrane. Functionally, the phosphoenolpyruvate-dependent sugar phosphotransferase system (sugar PTS), a major carbohydrate active -transport system, catalyzes the phosphorylation of incoming sugar substrates concomitantly with their translocation across the cell membrane. This system is involved in beta-glucoside transport. Acts both as a kinase and as a phosphatase on ArbG. This chain is PTS system beta-glucoside-specific EIIBCA component (arbF), found in Dickeya chrysanthemi (Pectobacterium chrysanthemi).